We begin with the raw amino-acid sequence, 873 residues long: Calmodulin-dependent glutamylase SidJ (873 aa).

Residues 16-90 (QSEDNPSETA…TTSTTKQKGP (75 aa)) are disordered. The segment covering 22 to 58 (SETAVETTDVSTKIKTTDTTQEESSVKTKTVVPTQPG) has biased composition (polar residues). Residues Asp542 and Asp545 each coordinate Mg(2+). Residues 851 to 873 (NLSEKSDIDSEKPESERTTDKRL) are disordered.

As to quaternary structure, interacts with host calmodulin/CALM1; this interaction is required for glutamylase activity. Requires Mg(2+) as cofactor.

It catalyses the reaction L-glutamyl-[protein] + L-glutamate + ATP = gamma-L-glutamyl-L-glutamyl-[protein] + ADP + phosphate + H(+). The enzyme catalyses (L-glutamyl)(n)-gamma-L-glutamyl-L-glutamyl-[protein] + L-glutamate + ATP = (L-glutamyl)(n+1)-gamma-L-glutamyl-L-glutamyl-[protein] + ADP + phosphate + H(+). Glytamylation catalyzed by SidJ requires host calmodulin and can be regulated by intracellular changes in Ca2+ concentrations. Also requires ATP. Functionally, glutamylase that mediates the covalent attachment of glutamate moieties to SdeA on one of the catalytic residues that is required for its mono-ADP-ribosyltransferase activity. In turn, inhibits SdeA ubiquitinating activity. Also glutamylates related SdeB, SdeC and SidE. Glutamylase activity only occurs in the host since it requires host calmodulin. May also reverse the SdeA-mediated substrate ubiquitination by cleaving the phosphodiester bond that links phosphoribosylated ubiquitin to protein substrates via its deubiquitinase activity. In Legionella pneumophila subsp. pneumophila (strain Philadelphia 1 / ATCC 33152 / DSM 7513), this protein is Calmodulin-dependent glutamylase SidJ.